Reading from the N-terminus, the 704-residue chain is Elongation factor G (704 aa).

Residues 8 to 291 (DKVRNIGIMA…AVVEYLASPV (284 aa)) form the tr-type G domain. Residues 17-24 (AHIDAGKT), 90-94 (DTPGH), and 144-147 (NKMD) contribute to the GTP site.

The protein belongs to the TRAFAC class translation factor GTPase superfamily. Classic translation factor GTPase family. EF-G/EF-2 subfamily.

It is found in the cytoplasm. Functionally, catalyzes the GTP-dependent ribosomal translocation step during translation elongation. During this step, the ribosome changes from the pre-translocational (PRE) to the post-translocational (POST) state as the newly formed A-site-bound peptidyl-tRNA and P-site-bound deacylated tRNA move to the P and E sites, respectively. Catalyzes the coordinated movement of the two tRNA molecules, the mRNA and conformational changes in the ribosome. The polypeptide is Elongation factor G (Chlorobium limicola (strain DSM 245 / NBRC 103803 / 6330)).